We begin with the raw amino-acid sequence, 414 residues long: Esterase FrsA (414 aa).

It belongs to the FrsA family.

It carries out the reaction a carboxylic ester + H2O = an alcohol + a carboxylate + H(+). Catalyzes the hydrolysis of esters. The polypeptide is Esterase FrsA (Klebsiella pneumoniae subsp. pneumoniae (strain ATCC 700721 / MGH 78578)).